Consider the following 269-residue polypeptide: Flagellar hook-basal body complex protein FlhP (269 aa).

The stretch at 7–65 (TASTTLNQLQQQIDTISSNLSNSNTTGYKAKDTNFSELVRQQFDQVDEKNEEVAKARKT) forms a coiled coil.

Belongs to the flagella basal body rod proteins family.

The sequence is that of Flagellar hook-basal body complex protein FlhP (flhP) from Bacillus subtilis (strain 168).